We begin with the raw amino-acid sequence, 88 residues long: Small ribosomal subunit protein uS15 (88 aa).

It belongs to the universal ribosomal protein uS15 family. In terms of assembly, part of the 30S ribosomal subunit. Forms a bridge to the 50S subunit in the 70S ribosome, contacting the 23S rRNA.

Functionally, one of the primary rRNA binding proteins, it binds directly to 16S rRNA where it helps nucleate assembly of the platform of the 30S subunit by binding and bridging several RNA helices of the 16S rRNA. Forms an intersubunit bridge (bridge B4) with the 23S rRNA of the 50S subunit in the ribosome. This is Small ribosomal subunit protein uS15 from Halothermothrix orenii (strain H 168 / OCM 544 / DSM 9562).